Reading from the N-terminus, the 583-residue chain is Chromosomal replication initiator protein DnaA (583 aa).

Residues 1-91 (MSNSNFSIEE…KHVLKTRLDL (91 aa)) are domain I, interacts with DnaA modulators. Residues 91–241 (LSVSLAITST…SFNDGLDGES (151 aa)) are domain II. The disordered stretch occupies residues 151-239 (KAEQRDGASQ…SSSFNDGLDG (89 aa)). The span at 172 to 182 (EAARRREHDAD) shows a compositional bias: basic and acidic residues. Positions 242–458 (LLNKNYTFEN…GALIRVTAYC (217 aa)) are domain III, AAA+ region. Gly-286, Gly-288, Lys-289, and Thr-290 together coordinate ATP. Residues 459–583 (ALSHEPLTVE…TQKIKSHARD (125 aa)) are domain IV, binds dsDNA.

This sequence belongs to the DnaA family. In terms of assembly, oligomerizes as a right-handed, spiral filament on DNA at oriC.

The protein resides in the cytoplasm. Its function is as follows. Plays an essential role in the initiation and regulation of chromosomal replication. ATP-DnaA binds to the origin of replication (oriC) to initiate formation of the DNA replication initiation complex once per cell cycle. Binds the DnaA box (a 9 base pair repeat at the origin) and separates the double-stranded (ds)DNA. Forms a right-handed helical filament on oriC DNA; dsDNA binds to the exterior of the filament while single-stranded (ss)DNA is stabiized in the filament's interior. The ATP-DnaA-oriC complex binds and stabilizes one strand of the AT-rich DNA unwinding element (DUE), permitting loading of DNA polymerase. After initiation quickly degrades to an ADP-DnaA complex that is not apt for DNA replication. Binds acidic phospholipids. The polypeptide is Chromosomal replication initiator protein DnaA (Corynebacterium jeikeium (strain K411)).